A 92-amino-acid polypeptide reads, in one-letter code: MATTMRLDKYLKVSRLIKRRTVAKEVAEKGRIAVNGVTAKPGTNVKSGDELVIRFGPKIVTAKIERLEENAKKEQATEMYTILKEERTDESR.

The region spanning 5–65 (MRLDKYLKVS…GPKIVTAKIE (61 aa)) is the S4 RNA-binding domain.

Belongs to the RqcP family. In terms of assembly, associates with stalled 50S ribosomal subunits. Binds to RqcH, 23S rRNA and the P-site tRNA. Does not require RqcH for association with 50S subunits.

Functionally, key component of the ribosome quality control system (RQC), a ribosome-associated complex that mediates the extraction of incompletely synthesized nascent chains from stalled ribosomes and their subsequent degradation. RqcH recruits Ala-charged tRNA, and with RqcP directs the elongation of stalled nascent chains on 50S ribosomal subunits, leading to non-templated C-terminal alanine extensions (Ala tail). The Ala tail promotes nascent chain degradation. RqcP is associated with the translocation-like movement of the peptidyl-tRNA from the A-site into the P-site. The protein is RQC P-site tRNA stabilizing factor of Listeria innocua serovar 6a (strain ATCC BAA-680 / CLIP 11262).